A 198-amino-acid polypeptide reads, in one-letter code: ATP-dependent Clp protease proteolytic subunit 2 (198 aa).

The active-site Nucleophile is serine 94. Histidine 119 is a catalytic residue.

This sequence belongs to the peptidase S14 family. Fourteen ClpP subunits assemble into 2 heptameric rings which stack back to back to give a disk-like structure with a central cavity, resembling the structure of eukaryotic proteasomes.

Its subcellular location is the cytoplasm. The enzyme catalyses Hydrolysis of proteins to small peptides in the presence of ATP and magnesium. alpha-casein is the usual test substrate. In the absence of ATP, only oligopeptides shorter than five residues are hydrolyzed (such as succinyl-Leu-Tyr-|-NHMec, and Leu-Tyr-Leu-|-Tyr-Trp, in which cleavage of the -Tyr-|-Leu- and -Tyr-|-Trp bonds also occurs).. In terms of biological role, cleaves peptides in various proteins in a process that requires ATP hydrolysis. Has a chymotrypsin-like activity. Plays a major role in the degradation of misfolded proteins. The chain is ATP-dependent Clp protease proteolytic subunit 2 from Borreliella burgdorferi (strain ATCC 35210 / DSM 4680 / CIP 102532 / B31) (Borrelia burgdorferi).